The primary structure comprises 172 residues: Adenine phosphoribosyltransferase (172 aa).

It belongs to the purine/pyrimidine phosphoribosyltransferase family. As to quaternary structure, homodimer.

The protein resides in the cytoplasm. The enzyme catalyses AMP + diphosphate = 5-phospho-alpha-D-ribose 1-diphosphate + adenine. The protein operates within purine metabolism; AMP biosynthesis via salvage pathway; AMP from adenine: step 1/1. Functionally, catalyzes a salvage reaction resulting in the formation of AMP, that is energically less costly than de novo synthesis. In Polynucleobacter necessarius subsp. necessarius (strain STIR1), this protein is Adenine phosphoribosyltransferase.